Here is a 174-residue protein sequence, read N- to C-terminus: ATP-dependent protease subunit HslV (174 aa).

The active site involves Thr2. The Na(+) site is built by Gly157, Cys160, and Thr163.

It belongs to the peptidase T1B family. HslV subfamily. A double ring-shaped homohexamer of HslV is capped on each side by a ring-shaped HslU homohexamer. The assembly of the HslU/HslV complex is dependent on binding of ATP.

The protein resides in the cytoplasm. It catalyses the reaction ATP-dependent cleavage of peptide bonds with broad specificity.. Its activity is regulated as follows. Allosterically activated by HslU binding. In terms of biological role, protease subunit of a proteasome-like degradation complex believed to be a general protein degrading machinery. The sequence is that of ATP-dependent protease subunit HslV from Shewanella sediminis (strain HAW-EB3).